Here is a 924-residue protein sequence, read N- to C-terminus: Protein argonaute 4 (924 aa).

2 disordered regions span residues 1–37 (MDSTNGNGADLESANGANGSGVTEALPPPPPVIPPNV) and 159–185 (TRANGNGSPNGNESPSDGDRKRLRRPN). Pro residues predominate over residues 26–37 (LPPPPPVIPPNV). A compositionally biased stretch (low complexity) spans 162–173 (NGNGSPNGNESP). The PAZ domain maps to 292-408 (PVVDFLIANQ…IPLELCALVP (117 aa)). Residues 577–885 (FILCVLPDKK…AAAQLGTFMK (309 aa)) form the Piwi domain. The Nuclear localization signal signature appears at 584-591 (DKKNSDLY).

This sequence belongs to the argonaute family. Ago subfamily. Interacts with NRPE1 (via C-terminus). Binding to NRPE1 is required for its function in RdDM. Interacts with turnip crinkle virus (TCV) capsid protein P38; this interaction inhibits probably RNA silencing ability of AGO4. Interacts with SDE3. Binds to RDM3. Binds chromatin at loci subject to transcriptional silencing. Interacts with MBD6. Expressed in embryos, mature leaves, vascular tissue of the sepals, stamens and stigma, at the tip of the style and siliques.

Its subcellular location is the nucleus. It is found in the nucleolus. The protein resides in the nucleoplasm. It localises to the cajal body. Functionally, together with RDM3, required for transcriptional gene silencing (TGS) by DNA methylation and repressive histone modifications (H3K9me2) of several chromatin loci. Component of the RISC complex that associate with the small interfering RNA (siRNA) pathway involved in direct cytosine methylation at endogenous DNA repeats. Forms a AGO4/NRPE1/siRNA complex in cajal body, facilitating its function in RNA-directed gene silencing of target loci. Required for CpNpG and asymmetric DNA methylation as well as histone H3 'Lys-9' methylation (H3K9me) at SUP and SN1 loci. May be not required for CpG methylation. Required for the production and maintenance of retrotransposon SN1 and Copia and ribosomal 5S 25 nucleotide siRNAs specialized in gene silencing at chromatin level. Involved in de novo methylation of FWA gene and required for the maintenance of RNA-directed DNA methylation (RdDM) triggered by inverted repeat transgenes. Interacts with miRNA miR390 and miR172, targeting respectively TAS3 and AP2 mRNAs, and mediates cleavage of miRNA targets. Associates mainly with small RNAs of 24 nucleotide in length and preferentially recruits small RNAs with a 5' terminal adenosine. Targeted by the turnip yellows virus (TuYV) protein P0 (via F-box-like domain) for probable proteasome degradation and thereby inactivating AGO4 function in RNA silencing. Required for resistance to the bacterial pathogen P.syringae. Works independently of the RdDM pathway in mediating resistance to P.syringae. RdDM is involved in viral genome methylation as an epigenetic defense against geminiviruses. This Arabidopsis thaliana (Mouse-ear cress) protein is Protein argonaute 4.